A 154-amino-acid chain; its full sequence is MDTNLNFSPSQSNDLSTSSGYENVLSHFKQAALSVTQLYQASTTEVLKAQKAGYNQALREVLELIESGASIDFISQYCLEKLASSDNDSSVHNHHDNSVLRNEDTQLQPHIVCNRTVRAGRPVLDEDDEEMNIATPHKRRVYDLNSSWMKRGRR.

This is an uncharacterized protein from Schizosaccharomyces pombe (strain 972 / ATCC 24843) (Fission yeast).